The chain runs to 277 residues: Probable endonuclease 4 (277 aa).

The Zn(2+) site is built by histidine 67, histidine 107, glutamate 141, aspartate 173, histidine 176, histidine 210, aspartate 223, histidine 225, and glutamate 255.

This sequence belongs to the AP endonuclease 2 family. Zn(2+) is required as a cofactor.

It catalyses the reaction Endonucleolytic cleavage to 5'-phosphooligonucleotide end-products.. Its function is as follows. Endonuclease IV plays a role in DNA repair. It cleaves phosphodiester bonds at apurinic or apyrimidinic (AP) sites, generating a 3'-hydroxyl group and a 5'-terminal sugar phosphate. The protein is Probable endonuclease 4 of Haloarcula marismortui (strain ATCC 43049 / DSM 3752 / JCM 8966 / VKM B-1809) (Halobacterium marismortui).